We begin with the raw amino-acid sequence, 449 residues long: Delta(8)-fatty-acid desaturase 2 (449 aa).

In terms of domain architecture, Cytochrome b5 heme-binding spans 7–91 (KRYVTSEDLK…VRDHHVSDVS (85 aa)). 2 residues coordinate heme: histidine 42 and histidine 65. The next 2 helical transmembrane spans lie at 113-133 (VTLYTLTCVGVMLAAVLYGVL) and 138-158 (IWAHLISAVLLGLLWIQSAYV). The Histidine box-1 motif lies at 160–164 (HDSGH). A helical transmembrane segment spans residues 176-196 (LIQLLSGNCLTGISIAWWKWT). Positions 197-201 (HNAHH) match the Histidine box-2 motif. Transmembrane regions (helical) follow at residues 255–275 (FYPVMCVGRINLFIQTFLLLF), 284–304 (ALNIAGILVFWTWFPLLVSFL), and 311–331 (FIFVFVSFAVTAIQHVQFCLN). Positions 374–378 (QLEHH) match the Histidine box-3 motif.

The protein belongs to the fatty acid desaturase type 1 family. The cofactor is Fe cation. As to expression, highly expressed in flowers and siliques. Expressed at low levels in roots, leaves and stems.

It localises to the endoplasmic reticulum membrane. It carries out the reaction an N-acyl-(4R)-4-hydroxysphinganine + 2 Fe(II)-[cytochrome b5] + O2 + 2 H(+) = a (4R,8E)-4-hydroxysphingenine ceramide + 2 Fe(III)-[cytochrome b5] + 2 H2O. The enzyme catalyses an N-acyl-(4R)-4-hydroxysphinganine + 2 Fe(II)-[cytochrome b5] + O2 + 2 H(+) = a (4R,8Z)-4-hydroxysphing-8-enine ceramide + 2 Fe(III)-[cytochrome b5] + 2 H2O. Its function is as follows. Plays a major role as delta(8)-fatty-acid desaturase which introduces a double bond at the 8-position in the long-chain base (LCB) of ceramides with or without a hydroxy group at the 4-position. The enzyme produces both the 8E and 8Z isomers (in a 4:1 ratio). This structural modification contributes to the quantitative partitioning of ceramides between the two major sphingolipid classes, glucosylceramides and glycosylinositolphosphoryl ceramides. Sphingolipids are important membrane components involved in environmental stress responses, such as resistance to chilling, and act as cell signaling molecules. The chain is Delta(8)-fatty-acid desaturase 2 (SLD2) from Arabidopsis thaliana (Mouse-ear cress).